A 349-amino-acid chain; its full sequence is Protein AMBP (349 aa).

The signal sequence occupies residues 1–19 (MQGLRTLFLLLTACLASRA). The N-linked (GlcNAc...) asparagine glycan is linked to Asn-33. Cys-52 and Lys-110 together coordinate 3-hydroxy-L-kynurenine. Residues Cys-90 and Cys-187 are joined by a disulfide bond. The N-linked (GlcNAc...) asparagine glycan is linked to Asn-114. 3-hydroxy-L-kynurenine contacts are provided by Lys-136 and Lys-148. Ser-214 is a glycosylation site (O-linked (Xyl...) (chondroitin sulfate) serine). Intrachain disulfides connect Cys-230-Cys-280, Cys-239-Cys-263, Cys-255-Cys-276, Cys-286-Cys-336, Cys-295-Cys-319, and Cys-311-Cys-332. BPTI/Kunitz inhibitor domains are found at residues 230-280 (CQLN…LQTC) and 286-336 (CNLP…KEYC). Asn-233 is a glycosylation site (N-linked (GlcNAc...) asparagine).

It in the N-terminal section; belongs to the calycin superfamily. Lipocalin family. As to quaternary structure, monomer. Homodimer. In plasma, it occurs as a monomer or dimer and in covalently-linked complexes with immunoglobulin A (IgA), ALB/albumin and F2/prothrombin. Chromophore-bound alpha-1-microglobulin interacts with the constant region of immunoglobulin A. Chromophore-bound alpha-1-microglobulin interacts with ALB with molar ratio 2:1 and 1:1; this interaction does not prevent fatty acid binding to ALB. Interacts with F2/prothrombin (via N-terminus) with molar ratio 2:1 and 1:1; this interaction does not prevent the activation of prothrombin to thrombin. Interacts with NDUFAB1, a subunit of mitochondrial complex I. Interacts with FN1. I-alpha-I plasma protease inhibitors are assembled from one or two heavy chains (HC) and one light chain, bikunin. Inter-alpha-inhibitor (I-alpha-I) is composed of ITIH1/HC1, ITIH2/HC2 and bikunin, and pre-alpha-inhibitor (P-alpha-I) of ITIH3/HC3 and bikunin. Interacts with TNFAIP6 (via Link domain). In terms of assembly, monomer. Also occurs as a complex with tryptase in mast cells. The precursor is proteolytically processed into separately functioning proteins. In terms of processing, 3-hydroxykynurenine, an oxidized tryptophan metabolite that is common in biological fluids, reacts with Cys-53, Lys-111, Lys-137, and Lys-149 to form heterogeneous polycyclic chromophores including hydroxanthommatin. The reaction by alpha-1-microglobulin is autocatalytic; the human protein forms chromophore even when expressed in insect and bacterial cells. The chromophore can react with accessible cysteines forming non-reducible thioether cross-links with other molecules of alpha-1-microglobulin or with other proteins such as Ig alpha-1 chain C region 'Cys-352'. Post-translationally, heavy chains are interlinked with bikunin via a chondroitin 4-sulfate bridge to the C-terminal aspartate. Proteolytically cleaved by PRSS3 at Kunitz domain 2. In terms of tissue distribution, expressed by the liver and secreted in plasma (at protein level).

The protein localises to the secreted. Its subcellular location is the endoplasmic reticulum. It localises to the cytoplasm. The protein resides in the cytosol. It is found in the cell membrane. The protein localises to the nucleus membrane. Its subcellular location is the mitochondrion inner membrane. It localises to the extracellular space. The protein resides in the extracellular matrix. Functionally, antioxidant and tissue repair protein with reductase, heme-binding and radical-scavenging activities. Removes and protects against harmful oxidants and repairs macromolecules in intravascular and extravascular spaces and in intracellular compartments. Intravascularly, plays a regulatory role in red cell homeostasis by preventing heme- and reactive oxygen species-induced cell damage. Binds and degrades free heme to protect fetal and adult red blood cells from hemolysis. Reduces extracellular methemoglobin, a Fe3+ (ferric) form of hemoglobin that cannot bind oxygen, back to the Fe2+ (ferrous) form deoxyhemoglobin, which has oxygen-carrying potential. Upon acute inflammation, inhibits oxidation of low-density lipoprotein particles by MPO and limits vascular damage. Extravascularly, protects from oxidation products formed on extracellular matrix structures and cell membranes. Catalyzes the reduction of carbonyl groups on oxidized collagen fibers and preserves cellular and extracellular matrix ultrastructures. Importantly, counteracts the oxidative damage at blood-placenta interface, preventing leakage of free fetal hemoglobin into the maternal circulation. Intracellularly, has a role in maintaining mitochondrial redox homeostasis. Bound to complex I of the respiratory chain of mitochondria, may scavenge free radicals and preserve mitochondrial ATP synthesis. Protects renal tubule epithelial cells from heme-induced oxidative damage to mitochondria. Reduces cytochrome c from Fe3+ (ferric) to the Fe2+ (ferrous) state through formation of superoxide anion radicals in the presence of ascorbate or NADH/NADPH electron donor cofactors, ascorbate being the preferred cofactor. Has a chaperone role in facilitating the correct folding of bikunin in the endoplasmic reticulum compartment. Its function is as follows. Kunitz-type serine protease inhibitor and structural component of extracellular matrix with a role in extracellular space remodeling and cell adhesion. Among others, has antiprotease activity toward kallikrein, a protease involved in airway inflammation; inhibits GZMK/granzyme, a granule-stored serine protease involved in NK and T cell cytotoxic responses; and inhibits PLG/plasmin, a protease required for activation of matrix metalloproteinases. As part of I-alpha-I complex, provides for the heavy chains to be transferred from I-alpha-I complex to hyaluronan in the presence of TNFAIP6, in a dynamic process that releases free bikunin and remodels extracellular matrix proteoglycan structures. Free bikunin, but not its heavy chain-bound form, acts as a potent protease inhibitor in airway secretions. Part of hyaluronan-rich extracellular matrix that surrounds oocyte during cumulus oophorus expansion, an indispensable process for proper ovulation. Also inhibits calcium oxalate crystallization. In terms of biological role, kunitz-type serine protease inhibitor. Has high catalytic efficiency for F10/blood coagulation factor Xa and may act as an anticoagulant by inhibiting prothrombin activation. Inhibits trypsin and mast cell CMA1/chymase and tryptase proteases. In Mus musculus (Mouse), this protein is Protein AMBP (Ambp).